The following is a 567-amino-acid chain: Urease subunit alpha (567 aa).

Residues 129–567 (GGIDTHIHFI…LPMAQRYFLF (439 aa)) enclose the Urease domain. Positions 134, 136, and 217 each coordinate Ni(2+). N6-carboxylysine is present on Lys217. Residue His219 participates in substrate binding. Positions 246 and 272 each coordinate Ni(2+). His320 functions as the Proton donor in the catalytic mechanism. Asp360 is a Ni(2+) binding site.

It belongs to the metallo-dependent hydrolases superfamily. Urease alpha subunit family. As to quaternary structure, probable heterotrimer of UreA (gamma), UreB (beta) and UreC (alpha) subunits. Three heterotrimers associate to form the active enzyme. The trimeric urease interacts with an accessory complex composed of UreD, UreF and UreG, which is required for the assembly of the nickel containing metallocenter of UreC. The UreE protein may also play a direct role in nickel transfer to the urease apoprotein. It depends on Ni cation as a cofactor. Post-translationally, carboxylation allows a single lysine to coordinate two nickel ions.

The protein localises to the cytoplasm. It catalyses the reaction urea + 2 H2O + H(+) = hydrogencarbonate + 2 NH4(+). Its pathway is nitrogen metabolism; urea degradation; CO(2) and NH(3) from urea (urease route): step 1/1. The polypeptide is Urease subunit alpha (Proteus mirabilis (strain HI4320)).